A 430-amino-acid polypeptide reads, in one-letter code: MKTQMNYAKEGIFTKEMQIVAQKENLSKDFLLENIACGKIIIPANINHKSLDPNGIGFGLRTKVNVNLGVSNDCVDYSEEMKKVELAHKFDIEAIMDLSNYGKTSRFRDELVNVSKAMIGTVPVYDAVGFLEKDLKQIGAKDFLDVVYHHAKSGVDFMTIHAGINSRAAHIFKQSKRLTNIVSRGGSVLYAWMMMKDAENPFFEYYDDLLDICLKYDVTLSLGDALRPGSTHDASDGAQISELIELSLLTQRAWDVGVQVMIEGPGHMAINEIEANMQLEKRLCKGAPFYVLGPLVTDIGAGYDHISGAIGGAVAAASGADMLCYVTPAEHLRLPNLEDVREGIVATKIAAHAGDIAKLPKERARDDEMSKARQEIDWEKMFKLAIDGEKAKKMFNERRPDDLNSCSMCGKMCAMNTMNQILKGEDVSLA.

Residues N67, M96, Y125, H161, 183–185 (SRG), 224–227 (DALR), and E263 each bind substrate. Residue H267 participates in Zn(2+) binding. Y290 serves as a coordination point for substrate. Zn(2+) is bound at residue H331. 3 residues coordinate [4Fe-4S] cluster: C406, C409, and C413.

This sequence belongs to the ThiC family. In terms of assembly, homodimer. Requires [4Fe-4S] cluster as cofactor.

It carries out the reaction 5-amino-1-(5-phospho-beta-D-ribosyl)imidazole + S-adenosyl-L-methionine = 4-amino-2-methyl-5-(phosphooxymethyl)pyrimidine + CO + 5'-deoxyadenosine + formate + L-methionine + 3 H(+). Its pathway is cofactor biosynthesis; thiamine diphosphate biosynthesis. Its function is as follows. Catalyzes the synthesis of the hydroxymethylpyrimidine phosphate (HMP-P) moiety of thiamine from aminoimidazole ribotide (AIR) in a radical S-adenosyl-L-methionine (SAM)-dependent reaction. The polypeptide is Phosphomethylpyrimidine synthase (Campylobacter jejuni (strain RM1221)).